A 444-amino-acid chain; its full sequence is tRNA pseudouridine synthase Pus10 (444 aa).

The active-site Nucleophile is aspartate 265. 2 residues coordinate substrate: tyrosine 333 and tyrosine 405.

Belongs to the pseudouridine synthase Pus10 family.

It carries out the reaction uridine(54) in tRNA = pseudouridine(54) in tRNA. The catalysed reaction is uridine(55) in tRNA = pseudouridine(55) in tRNA. In terms of biological role, responsible for synthesis of pseudouridine from uracil-54 and uracil-55 in the psi GC loop of transfer RNAs. The protein is tRNA pseudouridine synthase Pus10 of Thermofilum pendens (strain DSM 2475 / Hrk 5).